The following is a 157-amino-acid chain: Probable succinate transporter subunit YjjB (157 aa).

4 consecutive transmembrane segments (helical) span residues 8–28 (FALA…AMVF), 50–70 (MILM…SMLV), 87–107 (VFTV…TAMI), and 129–149 (FLTA…PGLW).

The protein belongs to the ThrE exporter (TC 2.A.79) family. The transporter is composed of YjjB and YjjP.

Its subcellular location is the cell inner membrane. Involved in succinate export with YjjP. Both proteins are required for export. The sequence is that of Probable succinate transporter subunit YjjB from Escherichia coli (strain SE11).